The primary structure comprises 334 residues: Protein-methionine-sulfoxide reductase catalytic subunit MsrP (334 aa).

A signal peptide (tat-type signal) is located at residues 1–44; that stretch reads MKAVNPLTENDVTPESLFNARRRTVLKMLGMSAAALSLPGAARA. Residues N88, 91–92, C146, T181, N233, R238, and 249–251 each bind Mo-molybdopterin; these read YE and GIK.

Belongs to the MsrP family. Heterodimer of a catalytic subunit (MsrP) and a heme-binding subunit (MsrQ). It depends on Mo-molybdopterin as a cofactor. In terms of processing, predicted to be exported by the Tat system. The position of the signal peptide cleavage has not been experimentally proven.

It localises to the periplasm. The catalysed reaction is L-methionyl-[protein] + a quinone + H2O = L-methionyl-(S)-S-oxide-[protein] + a quinol. It catalyses the reaction L-methionyl-[protein] + a quinone + H2O = L-methionyl-(R)-S-oxide-[protein] + a quinol. Its function is as follows. Part of the MsrPQ system that repairs oxidized periplasmic proteins containing methionine sulfoxide residues (Met-O), using respiratory chain electrons. Thus protects these proteins from oxidative-stress damage caused by reactive species of oxygen and chlorine generated by the host defense mechanisms. MsrPQ is essential for the maintenance of envelope integrity under bleach stress, rescuing a wide series of structurally unrelated periplasmic proteins from methionine oxidation. The catalytic subunit MsrP is non-stereospecific, being able to reduce both (R-) and (S-) diastereoisomers of methionine sulfoxide. This Erwinia tasmaniensis (strain DSM 17950 / CFBP 7177 / CIP 109463 / NCPPB 4357 / Et1/99) protein is Protein-methionine-sulfoxide reductase catalytic subunit MsrP.